Reading from the N-terminus, the 299-residue chain is Bifunctional protein FolD 2 (299 aa).

Residues 168–170, Ser193, and Ile234 contribute to the NADP(+) site; that span reads GRS.

Belongs to the tetrahydrofolate dehydrogenase/cyclohydrolase family. Homodimer.

The catalysed reaction is (6R)-5,10-methylene-5,6,7,8-tetrahydrofolate + NADP(+) = (6R)-5,10-methenyltetrahydrofolate + NADPH. It catalyses the reaction (6R)-5,10-methenyltetrahydrofolate + H2O = (6R)-10-formyltetrahydrofolate + H(+). It functions in the pathway one-carbon metabolism; tetrahydrofolate interconversion. In terms of biological role, catalyzes the oxidation of 5,10-methylenetetrahydrofolate to 5,10-methenyltetrahydrofolate and then the hydrolysis of 5,10-methenyltetrahydrofolate to 10-formyltetrahydrofolate. In Rhizobium etli (strain ATCC 51251 / DSM 11541 / JCM 21823 / NBRC 15573 / CFN 42), this protein is Bifunctional protein FolD 2.